A 256-amino-acid polypeptide reads, in one-letter code: Dihydroorotate dehydrogenase B (NAD(+)), electron transfer subunit (256 aa).

An FAD-binding FR-type domain is found at 1–101; the sequence is MKKAHLTVQS…LGPLGNGFPV (101 aa). FAD is bound by residues 52-55, 69-71, and 76-77; these read RPLS, IYR, and GT. Positions 220, 225, 228, and 243 each coordinate [2Fe-2S] cluster.

The protein belongs to the PyrK family. As to quaternary structure, heterotetramer of 2 PyrK and 2 PyrD type B subunits. Requires [2Fe-2S] cluster as cofactor. The cofactor is FAD.

It functions in the pathway pyrimidine metabolism; UMP biosynthesis via de novo pathway; orotate from (S)-dihydroorotate (NAD(+) route): step 1/1. In terms of biological role, responsible for channeling the electrons from the oxidation of dihydroorotate from the FMN redox center in the PyrD type B subunit to the ultimate electron acceptor NAD(+). The sequence is that of Dihydroorotate dehydrogenase B (NAD(+)), electron transfer subunit from Bacillus velezensis (strain DSM 23117 / BGSC 10A6 / LMG 26770 / FZB42) (Bacillus amyloliquefaciens subsp. plantarum).